The sequence spans 456 residues: tRNA modification GTPase MnmE (456 aa).

Arginine 24, glutamate 81, and lysine 120 together coordinate (6S)-5-formyl-5,6,7,8-tetrahydrofolate. The 164-residue stretch at 216-379 (GMTVVIAGRP…LRDHLKACMG (164 aa)) folds into the TrmE-type G domain. Asparagine 226 contacts K(+). GTP contacts are provided by residues 226–231 (NAGKSS), 245–251 (TDIAGTT), 270–273 (DTAG), 335–338 (NKAD), and 359–361 (SAR). Serine 230 provides a ligand contact to Mg(2+). K(+) is bound by residues threonine 245, isoleucine 247, and threonine 250. Residue threonine 251 coordinates Mg(2+). Lysine 456 contributes to the (6S)-5-formyl-5,6,7,8-tetrahydrofolate binding site.

Belongs to the TRAFAC class TrmE-Era-EngA-EngB-Septin-like GTPase superfamily. TrmE GTPase family. In terms of assembly, homodimer. Heterotetramer of two MnmE and two MnmG subunits. It depends on K(+) as a cofactor.

It localises to the cytoplasm. Exhibits a very high intrinsic GTPase hydrolysis rate. Involved in the addition of a carboxymethylaminomethyl (cmnm) group at the wobble position (U34) of certain tRNAs, forming tRNA-cmnm(5)s(2)U34. This chain is tRNA modification GTPase MnmE, found in Pseudomonas entomophila (strain L48).